The chain runs to 226 residues: Uridylate kinase (226 aa).

Residue 9-10 (GS) coordinates ATP. Residue Gly-46 coordinates UMP. 2 residues coordinate ATP: Gly-47 and Arg-51. UMP-binding positions include Asp-68 and 116–122 (THPGHTT). ATP is bound by residues Thr-142, Asn-143, Tyr-148, and Asp-151.

This sequence belongs to the UMP kinase family. As to quaternary structure, homohexamer.

It is found in the cytoplasm. It carries out the reaction UMP + ATP = UDP + ADP. Its pathway is pyrimidine metabolism; CTP biosynthesis via de novo pathway; UDP from UMP (UMPK route): step 1/1. Inhibited by UTP. Functionally, catalyzes the reversible phosphorylation of UMP to UDP. This is Uridylate kinase from Methanocaldococcus jannaschii (strain ATCC 43067 / DSM 2661 / JAL-1 / JCM 10045 / NBRC 100440) (Methanococcus jannaschii).